The primary structure comprises 289 residues: Acetyl-coenzyme A carboxylase carboxyl transferase subunit beta (289 aa).

The 262-residue stretch at 28 to 289 (VMTKCPKCKK…QGGEMAVWQS (262 aa)) folds into the CoA carboxyltransferase N-terminal domain. Residues Cys-32, Cys-35, Cys-51, and Cys-54 each contribute to the Zn(2+) site. The C4-type zinc-finger motif lies at 32 to 54 (CPKCKKIMYTKEVLKNLKVCVNC).

It belongs to the AccD/PCCB family. Acetyl-CoA carboxylase is a heterohexamer composed of biotin carboxyl carrier protein (AccB), biotin carboxylase (AccC) and two subunits each of ACCase subunit alpha (AccA) and ACCase subunit beta (AccD). The cofactor is Zn(2+).

The protein localises to the cytoplasm. The enzyme catalyses N(6)-carboxybiotinyl-L-lysyl-[protein] + acetyl-CoA = N(6)-biotinyl-L-lysyl-[protein] + malonyl-CoA. The protein operates within lipid metabolism; malonyl-CoA biosynthesis; malonyl-CoA from acetyl-CoA: step 1/1. In terms of biological role, component of the acetyl coenzyme A carboxylase (ACC) complex. Biotin carboxylase (BC) catalyzes the carboxylation of biotin on its carrier protein (BCCP) and then the CO(2) group is transferred by the transcarboxylase to acetyl-CoA to form malonyl-CoA. The polypeptide is Acetyl-coenzyme A carboxylase carboxyl transferase subunit beta (Bacillus thuringiensis (strain Al Hakam)).